The following is a 435-amino-acid chain: Methylenetetrahydrofolate--tRNA-(uracil-5-)-methyltransferase TrmFO (435 aa).

Residue 10–15 coordinates FAD; sequence GAGLAG.

The protein belongs to the MnmG family. TrmFO subfamily. Requires FAD as cofactor.

The protein localises to the cytoplasm. It carries out the reaction uridine(54) in tRNA + (6R)-5,10-methylene-5,6,7,8-tetrahydrofolate + NADH + H(+) = 5-methyluridine(54) in tRNA + (6S)-5,6,7,8-tetrahydrofolate + NAD(+). The catalysed reaction is uridine(54) in tRNA + (6R)-5,10-methylene-5,6,7,8-tetrahydrofolate + NADPH + H(+) = 5-methyluridine(54) in tRNA + (6S)-5,6,7,8-tetrahydrofolate + NADP(+). In terms of biological role, catalyzes the folate-dependent formation of 5-methyl-uridine at position 54 (M-5-U54) in all tRNAs. The sequence is that of Methylenetetrahydrofolate--tRNA-(uracil-5-)-methyltransferase TrmFO from Geotalea uraniireducens (strain Rf4) (Geobacter uraniireducens).